Reading from the N-terminus, the 33-residue chain is Photosystem II reaction center protein T (33 aa).

Residues 3-23 (ALVYTFLLVSTLGIIFFAIFF) traverse the membrane as a helical segment.

This sequence belongs to the PsbT family. PSII is composed of 1 copy each of membrane proteins PsbA, PsbB, PsbC, PsbD, PsbE, PsbF, PsbH, PsbI, PsbJ, PsbK, PsbL, PsbM, PsbT, PsbY, PsbZ, Psb30/Ycf12, at least 3 peripheral proteins of the oxygen-evolving complex and a large number of cofactors. It forms dimeric complexes.

It localises to the plastid. The protein localises to the chloroplast thylakoid membrane. In terms of biological role, found at the monomer-monomer interface of the photosystem II (PS II) dimer, plays a role in assembly and dimerization of PSII. PSII is a light-driven water plastoquinone oxidoreductase, using light energy to abstract electrons from H(2)O, generating a proton gradient subsequently used for ATP formation. The protein is Photosystem II reaction center protein T of Helianthus annuus (Common sunflower).